Here is a 293-residue protein sequence, read N- to C-terminus: Putative ribose uptake protein RbsU (293 aa).

Transmembrane regions (helical) follow at residues 5–24 (AILIGLGPLLGWGLFPTIAS), 34–51 (IFGATVGTLIFAIVLALF), 58–80 (GGMALVFSLISGAGWAFGQIITF), 95–114 (TTAFQLLGASLWGVFALGNW), 121–138 (IIGFLALLVILIGARMTV), 153–170 (SAVLLLLVGEIGYWIYSA), 177–199 (IGGFKAFLPQAIGMVIVAVIYAL), 212–234 (VSWQQIISGFFFAFAALTYLISA), 241–263 (LATGFVLSQTSVVLATLTGIFFL), and 273–292 (MITIVGLVLILVAASITVFI).

This sequence belongs to the GRP transporter (TC 2.A.7.5) family.

The protein resides in the cell membrane. In terms of biological role, could be involved in the uptake of ribose. This chain is Putative ribose uptake protein RbsU (rbsU), found in Staphylococcus epidermidis (strain ATCC 12228 / FDA PCI 1200).